Consider the following 353-residue polypeptide: Phosphoribosylformylglycinamidine cyclo-ligase (353 aa).

Belongs to the AIR synthase family.

It localises to the cytoplasm. The enzyme catalyses 2-formamido-N(1)-(5-O-phospho-beta-D-ribosyl)acetamidine + ATP = 5-amino-1-(5-phospho-beta-D-ribosyl)imidazole + ADP + phosphate + H(+). Its pathway is purine metabolism; IMP biosynthesis via de novo pathway; 5-amino-1-(5-phospho-D-ribosyl)imidazole from N(2)-formyl-N(1)-(5-phospho-D-ribosyl)glycinamide: step 2/2. The polypeptide is Phosphoribosylformylglycinamidine cyclo-ligase (Methylocella silvestris (strain DSM 15510 / CIP 108128 / LMG 27833 / NCIMB 13906 / BL2)).